The primary structure comprises 257 residues: Pyridoxine/pyridoxamine 5'-phosphate oxidase (257 aa).

33-36 contributes to the substrate binding site; sequence RIKY. 90–93 is a binding site for FMN; that stretch reads RFVL. Position 95 (Lys95) interacts with pyridoxal 5'-phosphate. FMN is bound by residues 105-106 and Lys112; that span reads YT. Pyridoxal 5'-phosphate is bound by residues Tyr152, Arg156, and Ser160. FMN-binding positions include 169 to 170 and Trp216; that span reads QS. A substrate-binding site is contributed by 222–224; the sequence is RLH. Arg226 is a binding site for FMN.

Belongs to the pyridoxamine 5'-phosphate oxidase family. Homodimer. It depends on FMN as a cofactor. In terms of tissue distribution, expressed in silk gland and fat body of the larva.

It carries out the reaction pyridoxamine 5'-phosphate + O2 + H2O = pyridoxal 5'-phosphate + H2O2 + NH4(+). The catalysed reaction is pyridoxine 5'-phosphate + O2 = pyridoxal 5'-phosphate + H2O2. Its pathway is cofactor metabolism; pyridoxal 5'-phosphate salvage; pyridoxal 5'-phosphate from pyridoxamine 5'-phosphate: step 1/1. The protein operates within cofactor metabolism; pyridoxal 5'-phosphate salvage; pyridoxal 5'-phosphate from pyridoxine 5'-phosphate: step 1/1. Catalyzes the oxidation of either pyridoxine 5'-phosphate (PNP) or pyridoxamine 5'-phosphate (PMP) into pyridoxal 5'-phosphate (PLP). This chain is Pyridoxine/pyridoxamine 5'-phosphate oxidase, found in Bombyx mori (Silk moth).